Reading from the N-terminus, the 432-residue chain is Adenylosuccinate synthetase (432 aa).

GTP-binding positions include 13 to 19 (GDEGKGK) and 41 to 43 (GHT). Asp-14 serves as the catalytic Proton acceptor. Residues Asp-14 and Gly-41 each contribute to the Mg(2+) site. Residues 14–17 (DEGK), 39–42 (NAGH), Thr-130, Arg-144, Gln-225, Thr-240, and Arg-304 each bind IMP. His-42 acts as the Proton donor in catalysis. Position 300 to 306 (300 to 306 (AVTGRPR)) interacts with substrate. Residues Arg-306, 332–334 (KLD), and 415–417 (STG) contribute to the GTP site.

The protein belongs to the adenylosuccinate synthetase family. As to quaternary structure, homodimer. The cofactor is Mg(2+).

It localises to the cytoplasm. It carries out the reaction IMP + L-aspartate + GTP = N(6)-(1,2-dicarboxyethyl)-AMP + GDP + phosphate + 2 H(+). The protein operates within purine metabolism; AMP biosynthesis via de novo pathway; AMP from IMP: step 1/2. Functionally, plays an important role in the de novo pathway of purine nucleotide biosynthesis. Catalyzes the first committed step in the biosynthesis of AMP from IMP. The polypeptide is Adenylosuccinate synthetase (Actinobacillus pleuropneumoniae serotype 5b (strain L20)).